The sequence spans 408 residues: LL-diaminopimelate aminotransferase (408 aa).

Residues Tyr15 and Gly42 each coordinate substrate. Pyridoxal 5'-phosphate contacts are provided by residues Tyr72, 108–109 (SK), Tyr132, Asn187, Tyr218, and 246–248 (SFS). Substrate contacts are provided by Lys109, Tyr132, and Asn187. Residue Lys249 is modified to N6-(pyridoxal phosphate)lysine. Residues Arg257 and Asn292 each coordinate pyridoxal 5'-phosphate. Substrate is bound by residues Asn292 and Arg388.

The protein belongs to the class-I pyridoxal-phosphate-dependent aminotransferase family. LL-diaminopimelate aminotransferase subfamily. In terms of assembly, homodimer. Pyridoxal 5'-phosphate is required as a cofactor.

The catalysed reaction is (2S,6S)-2,6-diaminopimelate + 2-oxoglutarate = (S)-2,3,4,5-tetrahydrodipicolinate + L-glutamate + H2O + H(+). The protein operates within amino-acid biosynthesis; L-lysine biosynthesis via DAP pathway; LL-2,6-diaminopimelate from (S)-tetrahydrodipicolinate (aminotransferase route): step 1/1. Its function is as follows. Involved in the synthesis of meso-diaminopimelate (m-DAP or DL-DAP), required for both lysine and peptidoglycan biosynthesis. Catalyzes the direct conversion of tetrahydrodipicolinate to LL-diaminopimelate. This is LL-diaminopimelate aminotransferase from Leptospira interrogans serogroup Icterohaemorrhagiae serovar Lai (strain 56601).